The sequence spans 94 residues: Co-chaperonin GroES (94 aa).

Belongs to the GroES chaperonin family. Heptamer of 7 subunits arranged in a ring. Interacts with the chaperonin GroEL.

The protein localises to the cytoplasm. Functionally, together with the chaperonin GroEL, plays an essential role in assisting protein folding. The GroEL-GroES system forms a nano-cage that allows encapsulation of the non-native substrate proteins and provides a physical environment optimized to promote and accelerate protein folding. GroES binds to the apical surface of the GroEL ring, thereby capping the opening of the GroEL channel. This chain is Co-chaperonin GroES, found in Staphylococcus epidermidis (strain ATCC 35984 / DSM 28319 / BCRC 17069 / CCUG 31568 / BM 3577 / RP62A).